A 255-amino-acid chain; its full sequence is MDLIPAIDLMNGKCVRLFKGDFNKRKDFAKEPHEQAEFWEREGAKYIHIVDLDAAKTGSPTNDKSIKKIAKTVNIPIQIGGGIRSQERIEQLFSYGVEKVIMGTSAIENKELVKDLSNKFPGRIIVGIDAKDGKVSTRGWLEQSNIFATDLVKEFSSFKIASFIVTDINTDGTLEGTNEEFIKSILEITDIPVIASGGVGSISDLLSLVKFENSGLFGVIVGKALYENKFTINEANNVLSAERLNDIDLNTNYYA.

The Proton acceptor role is filled by Asp-8. Catalysis depends on Asp-129, which acts as the Proton donor.

It belongs to the HisA/HisF family.

It localises to the cytoplasm. It carries out the reaction 1-(5-phospho-beta-D-ribosyl)-5-[(5-phospho-beta-D-ribosylamino)methylideneamino]imidazole-4-carboxamide = 5-[(5-phospho-1-deoxy-D-ribulos-1-ylimino)methylamino]-1-(5-phospho-beta-D-ribosyl)imidazole-4-carboxamide. The protein operates within amino-acid biosynthesis; L-histidine biosynthesis; L-histidine from 5-phospho-alpha-D-ribose 1-diphosphate: step 4/9. This chain is 1-(5-phosphoribosyl)-5-[(5-phosphoribosylamino)methylideneamino] imidazole-4-carboxamide isomerase, found in Prochlorococcus marinus (strain AS9601).